Consider the following 119-residue polypeptide: Fluoride-specific ion channel FluC (119 aa).

4 helical membrane-spanning segments follow: residues 5–25 (IIPL…LNLA), 30–50 (IPPA…IGIF), 59–79 (WKLL…GFSL), and 97–117 (IFLH…IGAA). Residues G69 and T72 each coordinate Na(+).

This sequence belongs to the fluoride channel Fluc/FEX (TC 1.A.43) family.

The protein localises to the cell inner membrane. It carries out the reaction fluoride(in) = fluoride(out). Na(+) is not transported, but it plays an essential structural role and its presence is essential for fluoride channel function. In terms of biological role, fluoride-specific ion channel. Important for reducing fluoride concentration in the cell, thus reducing its toxicity. This chain is Fluoride-specific ion channel FluC, found in Neisseria meningitidis serogroup B (strain ATCC BAA-335 / MC58).